The sequence spans 1364 residues: Kinectin (1364 aa).

The Cytoplasmic segment spans residues 1–6 (MEFYES). Residues 7–29 (TYFIILIPSVVITVIFLFFWLFM) form a helical; Signal-anchor for type II membrane protein membrane-spanning segment. Residues 30 to 1364 (KETLYDEVLA…KGREHYQLVE (1335 aa)) lie on the Lumenal side of the membrane. Composition is skewed to basic and acidic residues over residues 46-56 (KFPPTKSDKKK), 73-86 (HESD…DFKL), 121-135 (QKAA…ESEG), and 170-179 (QKNDDQDTKT). Residues 46-207 (KFPPTKSDKK…VKQENVSGKK (162 aa)) are disordered. Residues asparagine 202, asparagine 267, asparagine 623, asparagine 638, asparagine 704, asparagine 775, asparagine 976, asparagine 1061, asparagine 1088, and asparagine 1094 are each glycosylated (N-linked (GlcNAc...) asparagine). A coiled-coil region spans residues 315-1085 (KASKAESAAA…VETRELLQKL (771 aa)). The stretch at 1116–1306 (SGSEDIKVME…ASLEREIGKV (191 aa)) forms a coiled coil.

The protein belongs to the kinectin family. In terms of assembly, parallel homodimers formed between the membrane-bound and the cytosolic form, and also between 2 cytosolic forms. In terms of processing, both the membrane and cytoplasmic forms seem to be myristoylated.

Its subcellular location is the endoplasmic reticulum membrane. Receptor for kinesin thus involved in kinesin-driven vesicle motility. This Gallus gallus (Chicken) protein is Kinectin (KTN1).